The sequence spans 473 residues: ATP synthase subunit beta (473 aa).

Residue 158–165 (GGAGVGKT) coordinates ATP.

This sequence belongs to the ATPase alpha/beta chains family. F-type ATPases have 2 components, CF(1) - the catalytic core - and CF(0) - the membrane proton channel. CF(1) has five subunits: alpha(3), beta(3), gamma(1), delta(1), epsilon(1). CF(0) has three main subunits: a(1), b(2) and c(9-12). The alpha and beta chains form an alternating ring which encloses part of the gamma chain. CF(1) is attached to CF(0) by a central stalk formed by the gamma and epsilon chains, while a peripheral stalk is formed by the delta and b chains.

It is found in the cell membrane. The catalysed reaction is ATP + H2O + 4 H(+)(in) = ADP + phosphate + 5 H(+)(out). Produces ATP from ADP in the presence of a proton gradient across the membrane. The catalytic sites are hosted primarily by the beta subunits. This chain is ATP synthase subunit beta, found in Bacillus pumilus (strain SAFR-032).